The primary structure comprises 130 residues: Small ribosomal subunit protein uS8 (130 aa).

This sequence belongs to the universal ribosomal protein uS8 family. Part of the 30S ribosomal subunit.

One of the primary rRNA binding proteins, it binds directly to 16S rRNA central domain where it helps coordinate assembly of the platform of the 30S subunit. The sequence is that of Small ribosomal subunit protein uS8 from Methanocella arvoryzae (strain DSM 22066 / NBRC 105507 / MRE50).